We begin with the raw amino-acid sequence, 327 residues long: Olfactory receptor 226 (327 aa).

Topologically, residues 1-26 are extracellular; that stretch reads MERRNHSGRVSEFVLLGFPAPAPLRV. An N-linked (GlcNAc...) asparagine glycan is attached at Asn5. The chain crosses the membrane as a helical span at residues 27 to 50; the sequence is LLFFLSLLAYVLVLTENMLIIIAI. The Cytoplasmic portion of the chain corresponds to 51-58; that stretch reads RNHPTLHK. The chain crosses the membrane as a helical span at residues 59–80; the sequence is PMYFFLANMSFLEIWYVTVTIP. At 81 to 104 the chain is on the extracellular side; it reads KMLAGFIGSKENHGQLISFEACMT. Cys102 and Cys194 are disulfide-bonded. Residues 105-125 form a helical membrane-spanning segment; the sequence is QLYFFLGLGCTECVLLAVMAY. Residues 126–144 lie on the Cytoplasmic side of the membrane; the sequence is DRYVAICHPLHYPVIVSSR. A helical transmembrane segment spans residues 145–163; it reads LCVQMAAGSWAGGFGISMV. At 164 to 201 the chain is on the extracellular side; sequence KVFLISRLSYCGPNTINHFFCDVSPLLNLSCTDMSTAE. A helical transmembrane segment spans residues 202–224; it reads LTDFVLAIFILLGPLSVTGASYM. The Cytoplasmic segment spans residues 225-241; sequence AITGAVMRIPSAAGRHK. Residues 242–265 traverse the membrane as a helical segment; that stretch reads AFSTCASHLTVVIIFYAASIFIYA. Over 266–277 the chain is Extracellular; sequence RPKALSAFDTNK. A helical transmembrane segment spans residues 278 to 297; the sequence is LVSVLYAVIVPLFNPIIYCL. The Cytoplasmic portion of the chain corresponds to 298–327; the sequence is RNQDVKRALRRTLHLAQDQEANTNKGSKNG.

The protein belongs to the G-protein coupled receptor 1 family. As to expression, olfactory epithelium.

It localises to the cell membrane. Functionally, odorant receptor. This is Olfactory receptor 226 (Olr226) from Rattus norvegicus (Rat).